The chain runs to 83 residues: Exodeoxyribonuclease 7 small subunit (83 aa).

The protein belongs to the XseB family. Heterooligomer composed of large and small subunits.

The protein resides in the cytoplasm. It catalyses the reaction Exonucleolytic cleavage in either 5'- to 3'- or 3'- to 5'-direction to yield nucleoside 5'-phosphates.. Its function is as follows. Bidirectionally degrades single-stranded DNA into large acid-insoluble oligonucleotides, which are then degraded further into small acid-soluble oligonucleotides. The sequence is that of Exodeoxyribonuclease 7 small subunit from Rhizobium rhizogenes (strain K84 / ATCC BAA-868) (Agrobacterium radiobacter).